We begin with the raw amino-acid sequence, 796 residues long: Protein translocase subunit SecA 2 (796 aa).

ATP contacts are provided by residues Gln84, 102 to 106, and Asp496; that span reads GEGKT.

This sequence belongs to the SecA family. Monomer and homodimer. Part of the essential Sec protein translocation apparatus which comprises SecA, SecYEG and auxiliary proteins SecDF. Other proteins may also be involved.

The protein resides in the cell membrane. The protein localises to the cytoplasm. It catalyses the reaction ATP + H2O + cellular proteinSide 1 = ADP + phosphate + cellular proteinSide 2.. Functionally, part of the Sec protein translocase complex. Interacts with the SecYEG preprotein conducting channel. Has a central role in coupling the hydrolysis of ATP to the transfer of proteins into and across the cell membrane, serving as an ATP-driven molecular motor driving the stepwise translocation of polypeptide chains across the membrane. This chain is Protein translocase subunit SecA 2, found in Staphylococcus haemolyticus (strain JCSC1435).